Reading from the N-terminus, the 134-residue chain is Cytochrome b (134 aa).

3 helical membrane passes run 33 to 53 (FGSL…FLAM), 77 to 98 (WLLR…YLHV), and 113 to 133 (WNIG…GYVL). 2 residues coordinate heme b: His83 and His97.

Belongs to the cytochrome b family. In terms of assembly, the cytochrome bc1 complex contains 11 subunits: 3 respiratory subunits (MT-CYB, CYC1 and UQCRFS1), 2 core proteins (UQCRC1 and UQCRC2) and 6 low-molecular weight proteins (UQCRH/QCR6, UQCRB/QCR7, UQCRQ/QCR8, UQCR10/QCR9, UQCR11/QCR10 and a cleavage product of UQCRFS1). This cytochrome bc1 complex then forms a dimer. Heme b serves as cofactor.

It localises to the mitochondrion inner membrane. Its function is as follows. Component of the ubiquinol-cytochrome c reductase complex (complex III or cytochrome b-c1 complex) that is part of the mitochondrial respiratory chain. The b-c1 complex mediates electron transfer from ubiquinol to cytochrome c. Contributes to the generation of a proton gradient across the mitochondrial membrane that is then used for ATP synthesis. The polypeptide is Cytochrome b (MT-CYB) (Sturnira tildae (Tilda's yellow-shouldered bat)).